Reading from the N-terminus, the 28-residue chain is Potassium channel toxin alpha-KTx 9.10 (28 aa).

Intrachain disulfides connect C3-C19, C6-C24, and C10-C26.

Belongs to the short scorpion toxin superfamily. Potassium channel inhibitor family. Alpha-KTx 09 subfamily. Expressed by the venom gland.

The protein resides in the secreted. Blocks Shaker potassium channels. The sequence is that of Potassium channel toxin alpha-KTx 9.10 from Mesobuthus eupeus (Lesser Asian scorpion).